Reading from the N-terminus, the 209-residue chain is Protein bli-3 (209 aa).

A compositionally biased stretch (polar residues) spans 1–11 (MSGQGFSNADT). The interval 1–24 (MSGQGFSNADTGNKPADPYKQANL) is disordered.

This is Protein bli-3 (bli-3) from Neurospora crassa (strain ATCC 24698 / 74-OR23-1A / CBS 708.71 / DSM 1257 / FGSC 987).